A 105-amino-acid polypeptide reads, in one-letter code: Large ribosomal subunit protein P1 (105 aa).

Methionine 1 bears the Blocked amino end (Met) mark. A compositionally biased stretch (low complexity) spans 65–76 (VAAPAGQQTQQA). The tract at residues 65–105 (VAAPAGQQTQQAAEKKEEKKEEEKKGPSEEEIGGGLSSLFG) is disordered. The span at 77–92 (AEKKEEKKEEEKKGPS) shows a compositional bias: basic and acidic residues.

Belongs to the eukaryotic ribosomal protein P1/P2 family. Part of the 50S ribosomal subunit. Homodimer, it forms part of the ribosomal stalk which helps the ribosome interact with GTP-bound translation factors. Forms a heptameric uL10/P0(P1)2(P1)2(P1)2 complex, where uL10/P0 forms an elongated spine to which the P1 dimers bind in a sequential fashion.

Functionally, forms part of the ribosomal stalk, playing a central role in the interaction of the ribosome with GTP-bound translation factors. This Sulfolobus acidocaldarius (strain ATCC 33909 / DSM 639 / JCM 8929 / NBRC 15157 / NCIMB 11770) protein is Large ribosomal subunit protein P1.